A 396-amino-acid chain; its full sequence is Elongation factor Tu (396 aa).

Residues lysine 10–glutamate 206 enclose the tr-type G domain. The segment at glycine 19–threonine 26 is G1. Glycine 19–threonine 26 is a binding site for GTP. Position 26 (threonine 26) interacts with Mg(2+). Residues glycine 60–serine 64 are G2. The G3 stretch occupies residues aspartate 81–glycine 84. Residues aspartate 81 to histidine 85 and asparagine 136 to aspartate 139 each bind GTP. The G4 stretch occupies residues asparagine 136–aspartate 139. A G5 region spans residues serine 174 to valine 176.

It belongs to the TRAFAC class translation factor GTPase superfamily. Classic translation factor GTPase family. EF-Tu/EF-1A subfamily. Monomer.

It is found in the cytoplasm. It carries out the reaction GTP + H2O = GDP + phosphate + H(+). In terms of biological role, GTP hydrolase that promotes the GTP-dependent binding of aminoacyl-tRNA to the A-site of ribosomes during protein biosynthesis. This chain is Elongation factor Tu, found in Rhizorhabdus wittichii (strain DSM 6014 / CCUG 31198 / JCM 15750 / NBRC 105917 / EY 4224 / RW1) (Sphingomonas wittichii).